The sequence spans 898 residues: Methionine--tRNA ligase, cytoplasmic (898 aa).

Residues 74–198 form the GST C-terminal domain; sequence GWEQDDLTNQ…VLKQQGVLAL (125 aa). The short motif at 273 to 283 is the 'HIGH' region element; sequence PYVNNVPHLGN. The short motif at 593 to 597 is the 'KMSKS' region element; sequence KFSKS. ATP is bound at residue Lys-596. Phosphoserine is present on Ser-825. A Phosphothreonine modification is found at Thr-833. A WHEP-TRS domain is found at 839 to 895; sequence QIQALTEEVTKQGNIVRELKAQKADKNQIAAEVAKLLDLKKQLALAEGKPLETSKGK.

The protein belongs to the class-I aminoacyl-tRNA synthetase family. Monomer. Part of a multisubunit complex that groups tRNA ligases for Arg (RARS1), Asp (DARS1), Gln (QARS1), Ile (IARS1), Leu (LARS1), Lys (KARS1), Met (MARS1) the bifunctional ligase for Glu and Pro (EPRS1) and the auxiliary subunits AIMP1/p43, AIMP2/p38 and EEF1E1/p18. Forms a linear complex that contains MARS1, EEF1E1, EPRS1 and AIMP2 that is at the core of the multisubunit complex.

It localises to the cytoplasm. Its subcellular location is the cytosol. The protein resides in the nucleus. It is found in the nucleolus. It catalyses the reaction tRNA(Met) + L-methionine + ATP = L-methionyl-tRNA(Met) + AMP + diphosphate. Functionally, catalyzes the specific attachment of an amino acid to its cognate tRNA in a 2 step reaction: the amino acid (AA) is first activated by ATP to form AA-AMP and then transferred to the acceptor end of the tRNA. Plays a role in the synthesis of ribosomal RNA in the nucleolus. This Bos taurus (Bovine) protein is Methionine--tRNA ligase, cytoplasmic (MARS1).